A 344-amino-acid polypeptide reads, in one-letter code: Fructose-1,6-bisphosphatase class 1 (344 aa).

The Mg(2+) site is built by Glu-92, Asp-115, Leu-117, and Asp-118. Residues 118-121, Asn-211, Tyr-244, and Lys-274 each bind substrate; that span reads DGSS. Glu-280 provides a ligand contact to Mg(2+).

Belongs to the FBPase class 1 family. As to quaternary structure, homotetramer. Mg(2+) is required as a cofactor.

The protein resides in the cytoplasm. The catalysed reaction is beta-D-fructose 1,6-bisphosphate + H2O = beta-D-fructose 6-phosphate + phosphate. Its pathway is carbohydrate biosynthesis; gluconeogenesis. The protein is Fructose-1,6-bisphosphatase class 1 of Aeromonas salmonicida (strain A449).